The sequence spans 129 residues: Glycine cleavage system H protein (129 aa).

In terms of domain architecture, Lipoyl-binding spans 24-106; it reads LFKIGVSEFA…IGDGWLLIIK (83 aa). Residue lysine 65 is modified to N6-lipoyllysine.

It belongs to the GcvH family. The glycine cleavage system is composed of four proteins: P, T, L and H. Requires (R)-lipoate as cofactor.

Its function is as follows. The glycine cleavage system catalyzes the degradation of glycine. The H protein shuttles the methylamine group of glycine from the P protein to the T protein. In Prochlorococcus marinus subsp. pastoris (strain CCMP1986 / NIES-2087 / MED4), this protein is Glycine cleavage system H protein.